Here is a 1002-residue protein sequence, read N- to C-terminus: Chitin synthase II (1002 aa).

Disordered regions lie at residues 1-165 and 178-209; these read MDRP…GRTS and LDGS…SGSQ. Residues 63 to 78 are compositionally biased toward low complexity; that stretch reads SYQPSVVSSHSRSASV. Asparagine 123 carries N-linked (GlcNAc...) asparagine glycosylation. A glycan (N-linked (GlcNAc...) asparagine) is linked at asparagine 336. 8 helical membrane-spanning segments follow: residues 627-647, 669-689, 704-724, 740-760, 780-800, 808-828, 906-926, and 940-960; these read WLNG…QILA, LLFT…VAGG, SVIF…QFIL, SMII…YIVV, LIVS…LYLE, SLQY…YAFC, YMVV…SEIY, and ILWA…TFAI.

The protein belongs to the chitin synthase family. Class II subfamily. Expressed in hyphal bodies.

Its subcellular location is the cell membrane. It carries out the reaction [(1-&gt;4)-N-acetyl-beta-D-glucosaminyl](n) + UDP-N-acetyl-alpha-D-glucosamine = [(1-&gt;4)-N-acetyl-beta-D-glucosaminyl](n+1) + UDP + H(+). In terms of biological role, polymerizes chitin, a structural polymer of the cell wall and septum, by transferring the sugar moiety of UDP-GlcNAc to the non-reducing end of the growing chitin polymer. Contributes to the production of conidia and the ability of fungal conidia to germinate. Involved in fungal stress tolerances. The polypeptide is Chitin synthase II (Metarhizium acridum (strain CQMa 102)).